The chain runs to 297 residues: Acetyl-coenzyme A carboxylase carboxyl transferase subunit beta (297 aa).

The region spanning 27–296 is the CoA carboxyltransferase N-terminal domain; sequence LWHKCPSCEA…PEAAKEVAAV (270 aa). Cys31, Cys34, Cys50, and Cys53 together coordinate Zn(2+). Residues 31–53 form a C4-type zinc finger; it reads CPSCEAVLYRPELEKTLDVCPKC.

The protein belongs to the AccD/PCCB family. Acetyl-CoA carboxylase is a heterohexamer composed of biotin carboxyl carrier protein (AccB), biotin carboxylase (AccC) and two subunits each of ACCase subunit alpha (AccA) and ACCase subunit beta (AccD). The cofactor is Zn(2+).

It localises to the cytoplasm. The enzyme catalyses N(6)-carboxybiotinyl-L-lysyl-[protein] + acetyl-CoA = N(6)-biotinyl-L-lysyl-[protein] + malonyl-CoA. The protein operates within lipid metabolism; malonyl-CoA biosynthesis; malonyl-CoA from acetyl-CoA: step 1/1. Functionally, component of the acetyl coenzyme A carboxylase (ACC) complex. Biotin carboxylase (BC) catalyzes the carboxylation of biotin on its carrier protein (BCCP) and then the CO(2) group is transferred by the transcarboxylase to acetyl-CoA to form malonyl-CoA. This is Acetyl-coenzyme A carboxylase carboxyl transferase subunit beta from Pseudomonas entomophila (strain L48).